Consider the following 216-residue polypeptide: Orotate phosphoribosyltransferase (216 aa).

Residues Arg-101, Lys-105, His-107, and 127–135 (EDLISTGGS) contribute to the 5-phospho-alpha-D-ribose 1-diphosphate site. An orotate-binding site is contributed by Ser-131.

This sequence belongs to the purine/pyrimidine phosphoribosyltransferase family. PyrE subfamily. Homodimer. The cofactor is Mg(2+).

The catalysed reaction is orotidine 5'-phosphate + diphosphate = orotate + 5-phospho-alpha-D-ribose 1-diphosphate. It participates in pyrimidine metabolism; UMP biosynthesis via de novo pathway; UMP from orotate: step 1/2. Functionally, catalyzes the transfer of a ribosyl phosphate group from 5-phosphoribose 1-diphosphate to orotate, leading to the formation of orotidine monophosphate (OMP). This chain is Orotate phosphoribosyltransferase, found in Cutibacterium acnes (strain DSM 16379 / KPA171202) (Propionibacterium acnes).